A 273-amino-acid chain; its full sequence is Putative phosphoenolpyruvate synthase regulatory protein (273 aa).

Residue 153 to 160 (AVSRAGKT) coordinates ADP.

The protein belongs to the pyruvate, phosphate/water dikinase regulatory protein family. PSRP subfamily.

It carries out the reaction [pyruvate, water dikinase] + ADP = [pyruvate, water dikinase]-phosphate + AMP + H(+). The catalysed reaction is [pyruvate, water dikinase]-phosphate + phosphate + H(+) = [pyruvate, water dikinase] + diphosphate. Functionally, bifunctional serine/threonine kinase and phosphorylase involved in the regulation of the phosphoenolpyruvate synthase (PEPS) by catalyzing its phosphorylation/dephosphorylation. The chain is Putative phosphoenolpyruvate synthase regulatory protein from Xanthomonas oryzae pv. oryzae (strain MAFF 311018).